A 689-amino-acid chain; its full sequence is Elongation factor G (689 aa).

One can recognise a tr-type G domain in the interval 9-283 (AKFRNIGIMA…AIIEFMPSPL (275 aa)). GTP is bound by residues 18–25 (AHIDAGKT), 82–86 (DTPGH), and 136–139 (NKMD).

This sequence belongs to the TRAFAC class translation factor GTPase superfamily. Classic translation factor GTPase family. EF-G/EF-2 subfamily.

It is found in the cytoplasm. In terms of biological role, catalyzes the GTP-dependent ribosomal translocation step during translation elongation. During this step, the ribosome changes from the pre-translocational (PRE) to the post-translocational (POST) state as the newly formed A-site-bound peptidyl-tRNA and P-site-bound deacylated tRNA move to the P and E sites, respectively. Catalyzes the coordinated movement of the two tRNA molecules, the mRNA and conformational changes in the ribosome. This Clostridium botulinum (strain Okra / Type B1) protein is Elongation factor G.